The sequence spans 1043 residues: Isoleucine--tRNA ligase (1043 aa).

Residues 49 to 59 (PFATGLPHYGH) carry the 'HIGH' region motif. Residues 592-596 (KMSKR) carry the 'KMSKS' region motif. Position 595 (lysine 595) interacts with ATP.

It belongs to the class-I aminoacyl-tRNA synthetase family. IleS type 2 subfamily. As to quaternary structure, monomer. Requires Zn(2+) as cofactor.

The protein resides in the cytoplasm. The catalysed reaction is tRNA(Ile) + L-isoleucine + ATP = L-isoleucyl-tRNA(Ile) + AMP + diphosphate. Catalyzes the attachment of isoleucine to tRNA(Ile). As IleRS can inadvertently accommodate and process structurally similar amino acids such as valine, to avoid such errors it has two additional distinct tRNA(Ile)-dependent editing activities. One activity is designated as 'pretransfer' editing and involves the hydrolysis of activated Val-AMP. The other activity is designated 'posttransfer' editing and involves deacylation of mischarged Val-tRNA(Ile). This is Isoleucine--tRNA ligase from Chlamydia caviae (strain ATCC VR-813 / DSM 19441 / 03DC25 / GPIC) (Chlamydophila caviae).